The following is a 905-amino-acid chain: Protein LONGIFOLIA 2 (905 aa).

6 disordered regions span residues 42 to 136 (VSGG…GGLM), 232 to 268 (RLSL…RSSS), 285 to 315 (DTEQ…SRSV), 432 to 585 (STSP…SDSN), 606 to 626 (CDFP…IKQD), and 690 to 711 (VPFP…ECSP). The span at 65-74 (ESDKETERSS) shows a compositional bias: basic and acidic residues. Residues 90–117 (FESSSRPSFSSSPRSSSFSSAEVSTTAS) show a composition bias toward low complexity. Positions 286-296 (TEQRRENRFCD) are enriched in basic and acidic residues. 3 stretches are compositionally biased toward polar residues: residues 432 to 461 (STSP…SGKQ), 477 to 487 (LDSTKSNSPKT), and 501 to 516 (MTKS…SPRT). The span at 566–581 (PDDRLSDARSDLRSLR) shows a compositional bias: basic and acidic residues.

In terms of assembly, interacts (via C-terminus) with TON1A and TON1B.

It localises to the cytoplasm. Its subcellular location is the cytoskeleton. Its function is as follows. In association with LNG1, regulates leaf morphology by promoting longitudinal polar cell elongation independently of ROT3. Associates with microtubules and recruits TON1A and TON1B to the cytoskeleton through its C-terminus. The protein is Protein LONGIFOLIA 2 (LNG2) of Arabidopsis thaliana (Mouse-ear cress).